The sequence spans 113 residues: Nucleoid-associated protein SAV_4556 (113 aa).

Belongs to the YbaB/EbfC family. As to quaternary structure, homodimer.

The protein localises to the cytoplasm. Its subcellular location is the nucleoid. Functionally, binds to DNA and alters its conformation. May be involved in regulation of gene expression, nucleoid organization and DNA protection. The chain is Nucleoid-associated protein SAV_4556 from Streptomyces avermitilis (strain ATCC 31267 / DSM 46492 / JCM 5070 / NBRC 14893 / NCIMB 12804 / NRRL 8165 / MA-4680).